The sequence spans 60 residues: Temporin-CG1 (60 aa).

Residues 1-22 form the signal peptide; the sequence is MFTLKKSLLLLFFLATINLSLC. The propeptide at 23 to 43 is removed in mature form; it reads EQERNAEEERRDDDERNAEVE.

As to expression, expressed by the skin glands.

Its subcellular location is the secreted. Its function is as follows. Antimicrobial peptide active against a variety of Gram-positive and some Gram-negative bacterial strains. Has antifungal activity against a slime mold isolate. Has weak hemolytic activity against human erythrocytes. In Amolops chunganensis (Chungan torrent frog), this protein is Temporin-CG1.